The primary structure comprises 159 residues: NADH-quinone oxidoreductase subunit I (159 aa).

2 4Fe-4S ferredoxin-type domains span residues 51 to 80 and 90 to 119; these read RRYE…IEAD and TRYD…EGPN. [4Fe-4S] cluster is bound by residues Cys-60, Cys-63, Cys-66, Cys-70, Cys-99, Cys-102, Cys-105, and Cys-109.

This sequence belongs to the complex I 23 kDa subunit family. In terms of assembly, NDH-1 is composed of 14 different subunits. Subunits NuoA, H, J, K, L, M, N constitute the membrane sector of the complex. It depends on [4Fe-4S] cluster as a cofactor.

Its subcellular location is the cell inner membrane. It catalyses the reaction a quinone + NADH + 5 H(+)(in) = a quinol + NAD(+) + 4 H(+)(out). Its function is as follows. NDH-1 shuttles electrons from NADH, via FMN and iron-sulfur (Fe-S) centers, to quinones in the respiratory chain. The immediate electron acceptor for the enzyme in this species is believed to be ubiquinone. Couples the redox reaction to proton translocation (for every two electrons transferred, four hydrogen ions are translocated across the cytoplasmic membrane), and thus conserves the redox energy in a proton gradient. This Rickettsia rickettsii (strain Sheila Smith) protein is NADH-quinone oxidoreductase subunit I.